We begin with the raw amino-acid sequence, 632 residues long: MKIPVSRLEKFTSDNARVDTAAIQSLPNSRKIYIQGSRADIRVPMREISQSDTNTSQGIEKNPPICVYDTSGPYSDPDTNIDIRHGLLPLREKWIEEREDTEVLSGLSSSYSLKRLQDPALTAMRFNLTRPVRRAKGGSNVTQMHYARRGIITPEMEFIAIRENQRRERVTDLAKSELLTRQHPGQSFGAAIQEWITPEFVRDEVARGRAIIPANINHPEAEPMIIGRNFLVKINANIGNSALGSSIQDEVEKMTWAIRWGGDTVMDLSTGKNIHETREWIIRNSPVPIGTVPIYQALEKVDGKAEELTWEIFRDTLIEQAEQGVDYFTIHAGVRLPFVPMTAKRMTGIVSRGGSIMAKWCLAHHKESFLYTHFEDICEIMKAYDVSFSLGDGLRPGSIYDANDEAQFAELKTLGELTKIAWKHDIQTMIEGPGHVPMHLIRENMDLQLEHCHEAPFYTLGPLTTDIAPGYDHITSAIGAAMIGWYGTAMLCYVTPKEHLGLPDKDDVKDGIITYKIAAHAADLAKGHPGAQIRDNALSKARFEFRWNDQFNLSLDPDKARQFHDETLPQEGAKLAHFCSMCGPNFCSMKITQDVRDYAAQQGISENEALQEGMAKKADEFIEKGGEIYRKL.

Substrate-binding positions include Asn-237, Met-266, Tyr-295, His-331, 351-353 (SRG), 392-395 (DGLR), and Glu-431. Residue His-435 coordinates Zn(2+). Residue Tyr-458 coordinates substrate. His-499 provides a ligand contact to Zn(2+). 3 residues coordinate [4Fe-4S] cluster: Cys-579, Cys-582, and Cys-587.

Belongs to the ThiC family. In terms of assembly, homodimer. It depends on [4Fe-4S] cluster as a cofactor.

It carries out the reaction 5-amino-1-(5-phospho-beta-D-ribosyl)imidazole + S-adenosyl-L-methionine = 4-amino-2-methyl-5-(phosphooxymethyl)pyrimidine + CO + 5'-deoxyadenosine + formate + L-methionine + 3 H(+). The protein operates within cofactor biosynthesis; thiamine diphosphate biosynthesis. Functionally, catalyzes the synthesis of the hydroxymethylpyrimidine phosphate (HMP-P) moiety of thiamine from aminoimidazole ribotide (AIR) in a radical S-adenosyl-L-methionine (SAM)-dependent reaction. This chain is Phosphomethylpyrimidine synthase, found in Nitrosomonas eutropha (strain DSM 101675 / C91 / Nm57).